Reading from the N-terminus, the 265-residue chain is Protein synthesis inhibitor PD-S2 (265 aa).

Intrachain disulfides connect C34/C262 and C88/C110. N-linked (GlcNAc...) asparagine glycosylation occurs at N120.

Belongs to the ribosome-inactivating protein family. Type 1 RIP subfamily. In terms of processing, glycosylated. As to expression, seeds.

The catalysed reaction is Endohydrolysis of the N-glycosidic bond at one specific adenosine on the 28S rRNA.. Functionally, inhibits protein synthesis in animal cells. Useful as immunotoxin for pharmacological applications. The sequence is that of Protein synthesis inhibitor PD-S2 from Phytolacca dioica (Bella sombra tree).